We begin with the raw amino-acid sequence, 312 residues long: 2,3-dihydroxyphenylpropionate/2,3-dihydroxicinnamic acid 1,2-dioxygenase 1 (312 aa).

Histidine 115 serves as the catalytic Proton donor. The Proton acceptor role is filled by histidine 179.

Belongs to the LigB/MhpB extradiol dioxygenase family. Homotetramer. Fe(2+) serves as cofactor.

The catalysed reaction is 3-(2,3-dihydroxyphenyl)propanoate + O2 = (2Z,4E)-2-hydroxy-6-oxonona-2,4-dienedioate + H(+). It carries out the reaction (2E)-3-(2,3-dihydroxyphenyl)prop-2-enoate + O2 = (2Z,4E,7E)-2-hydroxy-6-oxonona-2,4,7-trienedioate + H(+). The protein operates within aromatic compound metabolism; 3-phenylpropanoate degradation. In terms of biological role, catalyzes the non-heme iron(II)-dependent oxidative cleavage of 2,3-dihydroxyphenylpropionic acid and 2,3-dihydroxicinnamic acid into 2-hydroxy-6-ketononadienedioate and 2-hydroxy-6-ketononatrienedioate, respectively. This chain is 2,3-dihydroxyphenylpropionate/2,3-dihydroxicinnamic acid 1,2-dioxygenase 1, found in Dechloromonas aromatica (strain RCB).